The chain runs to 121 residues: Small ribosomal subunit protein uS13 (121 aa).

The segment at Val97 to Lys121 is disordered. Residues Gln100–Lys121 show a composition bias toward basic residues.

The protein belongs to the universal ribosomal protein uS13 family. As to quaternary structure, part of the 30S ribosomal subunit. Forms a loose heterodimer with protein S19. Forms two bridges to the 50S subunit in the 70S ribosome.

Its function is as follows. Located at the top of the head of the 30S subunit, it contacts several helices of the 16S rRNA. In the 70S ribosome it contacts the 23S rRNA (bridge B1a) and protein L5 of the 50S subunit (bridge B1b), connecting the 2 subunits; these bridges are implicated in subunit movement. Contacts the tRNAs in the A and P-sites. The chain is Small ribosomal subunit protein uS13 from Prochlorococcus marinus (strain NATL2A).